The following is a 441-amino-acid chain: E3 ubiquitin-protein ligase APD1 (441 aa).

Helical transmembrane passes span 60–80 and 305–325; these read SNLYCFSLALLIWFFASFILI and IAYVIGTGVVICFMLVAIQFC. The segment at 390–429 adopts an RING-type zinc-finger fold; the sequence is CAICFDVPRDCFFLPCGHSVSCYECGTTMQEADGSCPICR.

In terms of tissue distribution, expressed in the shoot apical meristems (SAM), root tips and inflorescences, and, at low levels, in floral buds and pollen.

Its subcellular location is the endomembrane system. It localises to the vacuole membrane. It catalyses the reaction S-ubiquitinyl-[E2 ubiquitin-conjugating enzyme]-L-cysteine + [acceptor protein]-L-lysine = [E2 ubiquitin-conjugating enzyme]-L-cysteine + N(6)-ubiquitinyl-[acceptor protein]-L-lysine.. Its pathway is protein modification; protein ubiquitination. Functionally, involved in pollen mitosis II (PMII) regulation during male gametogenesis. The polypeptide is E3 ubiquitin-protein ligase APD1 (Arabidopsis thaliana (Mouse-ear cress)).